The chain runs to 349 residues: ATP phosphoribosyltransferase regulatory subunit (349 aa).

Positions 325 to 349 (ANGRGRGVRPRRASARGGRAGTRPR) are disordered. The span at 339-349 (ARGGRAGTRPR) shows a compositional bias: low complexity.

The protein belongs to the class-II aminoacyl-tRNA synthetase family. HisZ subfamily. Heteromultimer composed of HisG and HisZ subunits.

The protein resides in the cytoplasm. The protein operates within amino-acid biosynthesis; L-histidine biosynthesis; L-histidine from 5-phospho-alpha-D-ribose 1-diphosphate: step 1/9. In terms of biological role, required for the first step of histidine biosynthesis. May allow the feedback regulation of ATP phosphoribosyltransferase activity by histidine. This Anaeromyxobacter dehalogenans (strain 2CP-C) protein is ATP phosphoribosyltransferase regulatory subunit.